The chain runs to 604 residues: Prostaglandin G/H synthase 2 (604 aa).

The first 17 residues, 1–17 (MLARALLLCAAVALSHA), serve as a signal peptide directing secretion. An EGF-like domain is found at 18 to 55 (ANPCCSNPCQNRGVCMTMGFDQYKCDCTRTGFYGENCS). Intrachain disulfides connect Cys21–Cys32, Cys22–Cys145, Cys26–Cys42, and Cys44–Cys54. Asn53 is a glycosylation site (N-linked (GlcNAc...) asparagine). A substrate-binding site is contributed by Arg106. Residue Asn130 is glycosylated (N-linked (GlcNAc...) asparagine). The active-site Proton acceptor is the His193. Residue Tyr341 coordinates substrate. Catalysis depends on Tyr371, which acts as the For cyclooxygenase activity. Heme b is bound at residue His374. Asn396 carries an N-linked (GlcNAc...) asparagine glycan. At Cys526 the chain carries S-nitrosocysteine. A disulfide bridge connects residues Cys555 and Cys561. An O-acetylserine modification is found at Ser565. Asn580 carries an N-linked (GlcNAc...) asparagine glycan.

It belongs to the prostaglandin G/H synthase family. In terms of assembly, homodimer. Heme b is required as a cofactor. S-nitrosylation by NOS2 (iNOS) activates enzyme activity. S-nitrosylation may take place on different Cys residues in addition to Cys-526. In terms of processing, acetylated at Ser-565 by SPHK1. During neuroinflammation, acetylation by SPHK1 promotes neuronal secretion of specialized preresolving mediators (SPMs), especially 15-R-lipoxin A4, which results in an increase of phagocytic microglia. In terms of tissue distribution, highest expression in kidney and urinary bladder.

The protein localises to the microsome membrane. It is found in the endoplasmic reticulum membrane. Its subcellular location is the nucleus inner membrane. The protein resides in the nucleus outer membrane. It catalyses the reaction (5Z,8Z,11Z,14Z)-eicosatetraenoate + AH2 + 2 O2 = prostaglandin H2 + A + H2O. It carries out the reaction (5Z,8Z,11Z,14Z)-eicosatetraenoate + 2 O2 = prostaglandin G2. The enzyme catalyses prostaglandin G2 + AH2 = prostaglandin H2 + A + H2O. The catalysed reaction is (5Z,8Z,11Z,14Z,17Z)-eicosapentaenoate + 2 O2 = prostaglandin G3. It catalyses the reaction prostaglandin G3 + AH2 = prostaglandin H3 + A + H2O. It carries out the reaction (8Z,11Z,14Z)-eicosatrienoate + 2 O2 = prostaglandin G1. The enzyme catalyses prostaglandin G1 + AH2 = prostaglandin H1 + A + H2O. The catalysed reaction is 2-(5Z,8Z,11Z,14Z)-eicosatetraenoyl-sn-glycero-3-phosphoethanolamine + 2 O2 = 2-(prostaglandin G2)-sn-glycero-3-phosphoethanolamine. It catalyses the reaction 2-(prostaglandin G2)-sn-glycero-3-phosphoethanolamine + AH2 = 2-(prostaglandin H2)-sn-glycero-3-phosphoethanolamine + A + H2O. It carries out the reaction 2-(5Z,8Z,11Z,14Z)-eicosatetraenoyl-sn-glycero-3-phosphocholine + 2 O2 = 2-(prostaglandin G2)-sn-glycero-3-phosphocholine. The enzyme catalyses 2-(prostaglandin G2)-sn-glycero-3-phosphocholine + AH2 = 2-(prostaglandin H2)-sn-glycero-3-phosphocholine + A + H2O. The catalysed reaction is (15S)-hydroperoxy-(5Z,8Z,11Z,13E)-eicosatetraenoate + AH2 = (15S)-hydroxy-(5Z,8Z,11Z,13E)-eicosatetraenoate + A + H2O. It catalyses the reaction 2-(5Z,8Z,11Z,14Z)-eicosatetraenoyl-sn-glycero-3-phosphocholine + AH2 + O2 = 2-[(15S)-hydroxy-(5Z,8Z,11Z,13E)-eicosatetraenoyl]-sn-glycero-3-phosphocholine + A + H2O. It carries out the reaction 2-(5Z,8Z,11Z,14Z)-eicosatetraenoyl-sn-glycero-3-phosphocholine + AH2 + O2 = 2-[(15R)-hydroxy-(5Z,8Z,11Z,13E)-eicosatetraenoyl]-sn-glycero-3-phosphocholine + A + H2O. The enzyme catalyses 2-(5Z,8Z,11Z,14Z)-eicosatetraenoyl-sn-glycero-3-phosphocholine + AH2 + O2 = 2-[(11R)-hydroxy-(5Z,8Z,12E,14Z)-eicosatetraenoyl]-sn-glycero-3-phosphocholine + A + H2O. The catalysed reaction is (9Z,12Z)-octadecadienoate + AH2 + O2 = 9-hydroxy-(10E,12Z)-octadecadienoate + A + H2O. It catalyses the reaction (9Z,12Z)-octadecadienoate + AH2 + O2 = 13-hydroxy-(9Z,11E)-octadecadienoate + A + H2O. It carries out the reaction (5Z,8Z,11Z,14Z)-eicosatetraenoate + AH2 + O2 = (15R)-hydroxy-(5Z,8Z,11Z,13E)-eicosatetraenoate + A + H2O. The enzyme catalyses (5Z,8Z,11Z,14Z)-eicosatetraenoate + AH2 + O2 = (11R)-hydroxy-(5Z,8Z,12E,14Z)-eicosatetraenoate + A + H2O. The catalysed reaction is (5Z,8Z,11Z,14Z,17Z)-eicosapentaenoate + AH2 + O2 = (11R)-hydroxy-(5Z,8Z,12E,14Z,17Z)-eicosapentaenoate + A + H2O. It catalyses the reaction (5Z,8Z,11Z,14Z,17Z)-eicosapentaenoate + AH2 + O2 = (18S)-hydroxy-(5Z,8Z,11Z,14Z,16E)-eicosapentaenoate + A + H2O. It carries out the reaction (5Z,8Z,11Z,14Z,17Z)-eicosapentaenoate + AH2 + O2 = (18R)-hydroxy-(5Z,8Z,11Z,14Z,16E)-eicosapentaenoate + A + H2O. The enzyme catalyses (5Z,8Z,11Z,14Z,17Z)-eicosapentaenoate + AH2 + O2 = (15R)-hydroxy-(5Z,8Z,11Z,13E,17Z)-eicosapentaenoate + A + H2O. The catalysed reaction is (5Z,8Z,11Z,14Z,17Z)-eicosapentaenoate + AH2 + O2 = (15S)-hydroxy-(5Z,8Z,11Z,13E,17Z)-eicosapentaenoate + A + H2O. It catalyses the reaction (7Z,10Z,13Z,16Z,19Z)-docosapentaenoate + AH2 + O2 = 13R-hydroxy-(7Z,10Z,14E,16Z,19Z)-docosapentaenoate + A + H2O. It carries out the reaction (4Z,7Z,10Z,13Z,16Z,19Z)-docosahexaenoate + AH2 + O2 = 13-hydroxy-(4Z,7Z,10Z,14E,16Z,19Z)-docosahexaenoate + A + H2O. The enzyme catalyses (5S)-hydroxy-(6E,8Z,11Z,14Z)-eicosatetraenoate + AH2 + O2 = (5S,15R)-dihydroxy-(6E,8Z,11Z,13E)-eicosatetraenoate + A + H2O. The catalysed reaction is (4Z,7Z,10Z,13Z,16Z,19Z)-docosahexaenoate + AH2 + O2 = 17R-hydroxy-(4Z,7Z,10Z,13Z,15E,19Z)-docosahexaenoate + A + H2O. It catalyses the reaction (5S)-hydroxy-(6E,8Z,11Z,14Z)-eicosatetraenoate + AH2 + O2 = (5S,15S)-dihydroxy-(6E,8Z,11Z,13E)-eicosatetraenoate + A + H2O. It carries out the reaction (5S)-hydroxy-(6E,8Z,11Z,14Z)-eicosatetraenoate + AH2 + O2 = (5S,11R)-dihydroxy-(6E,8Z,12E,14Z)-eicosatetraenoate + A + H2O. The enzyme catalyses 2-(5Z,8Z,11Z,14Z-eicosatetraenoyl)-glycerol + 2 O2 = 2-glyceryl-prostaglandin G2. The catalysed reaction is 2-glyceryl-prostaglandin G2 + AH2 = 2-glyceryl-prostaglandin H2 + A + H2O. It catalyses the reaction (5Z,8Z,11Z,14Z)-eicosatetraenoate + O2 = (15R)-hydroperoxy-(5Z,8Z,11Z,13E)-eicosatetraenoate. It carries out the reaction (5Z,8Z,11Z,14Z)-eicosatetraenoate + O2 = 11R-hydroperoxy-(5Z,8Z,12E,14Z)-eicosatetraenoate. The enzyme catalyses (9Z,12Z)-octadecadienoate + AH2 + O2 = (9R)-hydroxy-(10E,12Z)-octadecadienoate + A + H2O. The catalysed reaction is (9Z,12Z)-octadecadienoate + AH2 + O2 = (9S)-hydroxy-(10E,12Z)-octadecadienoate + A + H2O. It catalyses the reaction (9Z,12Z)-octadecadienoate + AH2 + O2 = (13S)-hydroxy-(9Z,11E)-octadecadienoate + A + H2O. It carries out the reaction (9Z,12Z)-octadecadienoate + AH2 + O2 = (13R)-hydroxy-(9Z,11E)-octadecadienoate + A + H2O. The protein operates within lipid metabolism; prostaglandin biosynthesis. Its function is as follows. Dual cyclooxygenase and peroxidase in the biosynthesis pathway of prostanoids, a class of C20 oxylipins mainly derived from arachidonate ((5Z,8Z,11Z,14Z)-eicosatetraenoate, AA, C20:4(n-6)), with a particular role in the inflammatory response. The cyclooxygenase activity oxygenates AA to the hydroperoxy endoperoxide prostaglandin G2 (PGG2), and the peroxidase activity reduces PGG2 to the hydroxy endoperoxide prostaglandin H2 (PGH2), the precursor of all 2-series prostaglandins and thromboxanes. This complex transformation is initiated by abstraction of hydrogen at carbon 13 (with S-stereochemistry), followed by insertion of molecular O2 to form the endoperoxide bridge between carbon 9 and 11 that defines prostaglandins. The insertion of a second molecule of O2 (bis-oxygenase activity) yields a hydroperoxy group in PGG2 that is then reduced to PGH2 by two electrons. Similarly catalyzes successive cyclooxygenation and peroxidation of dihomo-gamma-linoleate (DGLA, C20:3(n-6)) and eicosapentaenoate (EPA, C20:5(n-3)) to corresponding PGH1 and PGH3, the precursors of 1- and 3-series prostaglandins. In an alternative pathway of prostanoid biosynthesis, converts 2-arachidonoyl lysophopholipids to prostanoid lysophopholipids, which are then hydrolyzed by intracellular phospholipases to release free prostanoids. Metabolizes 2-arachidonoyl glycerol yielding the glyceryl ester of PGH2, a process that can contribute to pain response. Generates lipid mediators from n-3 and n-6 polyunsaturated fatty acids (PUFAs) via a lipoxygenase-type mechanism. Oxygenates PUFAs to hydroperoxy compounds and then reduces them to corresponding alcohols. Plays a role in the generation of resolution phase interaction products (resolvins) during both sterile and infectious inflammation. Metabolizes docosahexaenoate (DHA, C22:6(n-3)) to 17R-HDHA, a precursor of the D-series resolvins (RvDs). As a component of the biosynthetic pathway of E-series resolvins (RvEs), converts eicosapentaenoate (EPA, C20:5(n-3)) primarily to 18S-HEPE that is further metabolized by ALOX5 and LTA4H to generate 18S-RvE1 and 18S-RvE2. In vascular endothelial cells, converts docosapentaenoate (DPA, C22:5(n-3)) to 13R-HDPA, a precursor for 13-series resolvins (RvTs) shown to activate macrophage phagocytosis during bacterial infection. In activated leukocytes, contributes to oxygenation of hydroxyeicosatetraenoates (HETE) to diHETES (5,15-diHETE and 5,11-diHETE). Can also use linoleate (LA, (9Z,12Z)-octadecadienoate, C18:2(n-6)) as substrate and produce hydroxyoctadecadienoates (HODEs) in a regio- and stereospecific manner,being (9R)-HODE ((9R)-hydroxy-(10E,12Z)-octadecadienoate) and (13S)-HODE ((13S)-hydroxy-(9Z,11E)-octadecadienoate) its major products. During neuroinflammation, plays a role in neuronal secretion of specialized preresolving mediators (SPMs) 15R-lipoxin A4 that regulates phagocytic microglia. The chain is Prostaglandin G/H synthase 2 (PTGS2) from Oryctolagus cuniculus (Rabbit).